We begin with the raw amino-acid sequence, 299 residues long: Elongation factor Ts, mitochondrial (299 aa).

A mitochondrion-targeting transit peptide spans 1–18; sequence MLFQRRLHFHQFFGKTRV.

This sequence belongs to the EF-Ts family.

It is found in the mitochondrion. Functionally, associates with the EF-Tu.GDP complex and induces the exchange of GDP to GTP. It remains bound to the aminoacyl-tRNA.EF-Tu.GTP complex up to the GTP hydrolysis stage on the ribosome. In Schizosaccharomyces pombe (strain 972 / ATCC 24843) (Fission yeast), this protein is Elongation factor Ts, mitochondrial (tsf1).